We begin with the raw amino-acid sequence, 154 residues long: 3-hydroxyacyl-[acyl-carrier-protein] dehydratase FabZ (154 aa).

Histidine 59 is an active-site residue.

It belongs to the thioester dehydratase family. FabZ subfamily.

It is found in the cytoplasm. It carries out the reaction a (3R)-hydroxyacyl-[ACP] = a (2E)-enoyl-[ACP] + H2O. Involved in unsaturated fatty acids biosynthesis. Catalyzes the dehydration of short chain beta-hydroxyacyl-ACPs and long chain saturated and unsaturated beta-hydroxyacyl-ACPs. The protein is 3-hydroxyacyl-[acyl-carrier-protein] dehydratase FabZ of Bartonella bacilliformis (strain ATCC 35685 / KC583 / Herrer 020/F12,63).